A 434-amino-acid polypeptide reads, in one-letter code: Serine--tRNA ligase (434 aa).

237 to 239 provides a ligand contact to L-serine; that stretch reads TAE. Position 268 to 270 (268 to 270) interacts with ATP; sequence RAE. Residue Glu291 participates in L-serine binding. 358 to 361 contacts ATP; that stretch reads EISS. Ser393 contacts L-serine.

This sequence belongs to the class-II aminoacyl-tRNA synthetase family. Type-1 seryl-tRNA synthetase subfamily. Homodimer. The tRNA molecule binds across the dimer.

The protein resides in the cytoplasm. The enzyme catalyses tRNA(Ser) + L-serine + ATP = L-seryl-tRNA(Ser) + AMP + diphosphate + H(+). The catalysed reaction is tRNA(Sec) + L-serine + ATP = L-seryl-tRNA(Sec) + AMP + diphosphate + H(+). Its pathway is aminoacyl-tRNA biosynthesis; selenocysteinyl-tRNA(Sec) biosynthesis; L-seryl-tRNA(Sec) from L-serine and tRNA(Sec): step 1/1. In terms of biological role, catalyzes the attachment of serine to tRNA(Ser). Is also able to aminoacylate tRNA(Sec) with serine, to form the misacylated tRNA L-seryl-tRNA(Sec), which will be further converted into selenocysteinyl-tRNA(Sec). The protein is Serine--tRNA ligase of Rhodopseudomonas palustris (strain ATCC BAA-98 / CGA009).